Consider the following 84-residue polypeptide: Small ribosomal subunit protein uS17 (84 aa).

This sequence belongs to the universal ribosomal protein uS17 family. As to quaternary structure, part of the 30S ribosomal subunit.

One of the primary rRNA binding proteins, it binds specifically to the 5'-end of 16S ribosomal RNA. The protein is Small ribosomal subunit protein uS17 of Porphyromonas gingivalis (strain ATCC 33277 / DSM 20709 / CIP 103683 / JCM 12257 / NCTC 11834 / 2561).